The chain runs to 65 residues: Toxin VmKTx1 (65 aa).

The N-terminal stretch at 1 to 21 (MKTSCLLTILLLSFLVAVAVA) is a signal peptide. Residues 22–28 (EGERSAR) constitute a propeptide that is removed on maturation. 4 cysteine pairs are disulfide-bonded: Cys-34/Cys-54, Cys-40/Cys-59, Cys-44/Cys-61, and Cys-49/Cys-64. Cysteine amide is present on Cys-64.

Belongs to the short scorpion toxin superfamily. Potassium channel inhibitor family. Alpha-KTx 23 subfamily. Expressed by the venom gland.

It is found in the secreted. Functionally, voltage-gated potassium channel inhibitor. Selectively and reversibly binds (Kd=0.77 nM) and blocks hKv1.3/KCNA3 potassium channels of human T-lymphocytes. Also shows a very weak effect on hKv1.2/KCNA2 (Kd=7.1 uM). Also reduces the fraction of CD40L expressing T cells that are stimulated by alphaCD3/alphaCD28. In Vaejovis mexicanus smithi (Mexican scorpion), this protein is Toxin VmKTx1.